A 124-amino-acid polypeptide reads, in one-letter code: Ragulator complex protein LAMTOR3 (124 aa).

Residues 57–70 (TDQGSKLGLSKNKS) form a required for interaction with LAMTOR2 region.

It belongs to the LAMTOR3 family. In terms of assembly, part of the Ragulator complex composed of LAMTOR1, LAMTOR2, LAMTOR3, LAMTOR4 and LAMTOR5. LAMTOR4 and LAMTOR5 form a heterodimer that interacts, through LAMTOR1, with a LAMTOR2, LAMTOR3 heterodimer. The Ragulator complex interacts with both the mTORC1 complex and heterodimers constituted of the Rag GTPases RagA/RRAGA, RagB/RRAGB, RagC/RRAGC and RagD/RRAGD; regulated by amino acid availability. The Ragulator complex interacts with SLC38A9; the probable amino acid sensor. Interacts with LAMTOR1 and LAMTOR2; the interaction is direct. Component of the lysosomal folliculin complex (LFC), composed of FLCN, FNIP1 (or FNIP2), RagA/RRAGA or RagB/RRAGB GDP-bound, RagC/RRAGC or RagD/RRAGD GTP-bound, and Ragulator. Interacts with MAP2K1/MEK1 and MAPK2. Interacts with MORG1.

The protein localises to the late endosome membrane. In terms of biological role, as part of the Ragulator complex it is involved in amino acid sensing and activation of mTORC1, a signaling complex promoting cell growth in response to growth factors, energy levels, and amino acids. Activated by amino acids through a mechanism involving the lysosomal V-ATPase, the Ragulator plays a dual role for the small GTPases Rag (RagA/RRAGA, RagB/RRAGB, RagC/RRAGC and/or RagD/RRAGD): it (1) acts as a guanine nucleotide exchange factor (GEF), activating the small GTPases Rag and (2) mediates recruitment of Rag GTPases to the lysosome membrane. Activated Ragulator and Rag GTPases function as a scaffold recruiting mTORC1 to lysosomes where it is in turn activated. Adapter protein that enhances the efficiency of the MAP kinase cascade facilitating the activation of MAPK2. This Mus musculus (Mouse) protein is Ragulator complex protein LAMTOR3 (Lamtor3).